Reading from the N-terminus, the 118-residue chain is Na(+)/H(+) antiporter subunit G1 (118 aa).

3 consecutive transmembrane segments (helical) span residues 9–29 (VSII…TGLI), 47–67 (LGAM…EGYV), and 69–89 (MQLI…SHLI).

Belongs to the CPA3 antiporters (TC 2.A.63) subunit G family. In terms of assembly, may form a heterooligomeric complex that consists of seven subunits: mnhA1, mnhB1, mnhC1, mnhD1, mnhE1, mnhF1 and mnhG1.

The protein resides in the cell membrane. Functionally, mnh complex is a Na(+)/H(+) antiporter involved in Na(+) excretion. This chain is Na(+)/H(+) antiporter subunit G1 (mnhG1), found in Staphylococcus epidermidis (strain ATCC 35984 / DSM 28319 / BCRC 17069 / CCUG 31568 / BM 3577 / RP62A).